The primary structure comprises 4588 residues: Protocadherin Fat 1 (4588 aa).

The first 21 residues, 1–21, serve as a signal peptide directing secretion; sequence MGRHLALLLLLLLLFQHFGDS. At 22–4181 the chain is on the extracellular side; it reads DGSQRLEQTP…STPWNIGLAE (4160 aa). Cadherin domains are found at residues 35 to 149 and 150 to 257; these read THLE…RPLF and SPTS…APVI. Asn40 is a glycosylation site (N-linked (GlcNAc...) asparagine). Asn333 carries an N-linked (GlcNAc...) asparagine glycan. Cadherin domains are found at residues 368–463, 464–569, 570–673, 718–822, 823–927, 928–1034, 1035–1139, 1140–1245, 1246–1357, 1359–1456, 1457–1562, 1563–1667, 1668–1765, 1766–1879, 1880–1979, 1980–2081, 2082–2182, 2183–2283, 2284–2390, 2391–2492, 2493–2596, 2597–2703, 2704–2809, 2810–2918, 2919–3023, 3024–3125, 3126–3230, 3231–3335, 3336–3440, 3441–3545, and 3546–3647; these read EKDV…PPEF, TQTA…TPLF, EKIN…VNLQ, STLP…PPEF, LQES…PPTF, IPPN…PPVF, SSFV…APQT, SEPV…KPQF, LQKF…EPIS, EESF…RPQF, STSK…APWF, TASS…SPKF, TSKE…APVF, MQAE…PPVF, AKPL…HLKF, TQDV…APVF, VNLP…MPVF, EKPF…PPVF, AQQS…PPLF, EQQI…SPAF, LQNE…APQF, RATK…LPKF, SEPF…SPVF, ESSP…PPRF, TAEI…SPVC, EKTL…APEF, SADP…PPVF, EYRE…TPVF, SQDT…APVF, SRGN…PPAI, and LPLE…AIRF. 3 N-linked (GlcNAc...) asparagine glycosylation sites follow: Asn660, Asn740, and Asn791. Asn998 is a glycosylation site (N-linked (GlcNAc...) asparagine). N-linked (GlcNAc...) asparagine glycans are attached at residues Asn1426 and Asn1551. Asn1748, Asn1864, Asn1902, Asn1940, and Asn1991 each carry an N-linked (GlcNAc...) asparagine glycan. 2 N-linked (GlcNAc...) asparagine glycosylation sites follow: Asn2325 and Asn2464. N-linked (GlcNAc...) asparagine glycans are attached at residues Asn3324, Asn3422, Asn3444, Asn3613, Asn3640, and Asn3716. One can recognise an EGF-like 1 domain in the interval 3790 to 3827; sequence VHHGCEDDPCPEGSECVSDPWEEKHTCVCPSGRFGQCP. Disulfide bonds link Cys3794–Cys3805, Cys3799–Cys3816, Cys3818–Cys3826, Cys3976–Cys4009, Cys4017–Cys4028, Cys4022–Cys4038, Cys4040–Cys4049, Cys4056–Cys4067, Cys4061–Cys4076, Cys4078–Cys4087, Cys4093–Cys4104, Cys4098–Cys4113, Cys4115–Cys4124, Cys4131–Cys4142, and Cys4136–Cys4151. A Laminin G-like domain is found at 3829–4009; sequence SSSMTLTGNS…EESVDVSPGC (181 aa). EGF-like domains lie at 4013–4050, 4052–4088, and 4089–4125; these read ATEDCASNPCQNGGVCNPSPAGGYYCKCSALYIGTHCE, SVNPCSSKPCLYGGTCVVDNGGFVCQCRGLYTGQRCQ, and LSPYCKDEPCKNGGTCFDSLDGAVCQCDSGFRGERCQ. Residues 4127 to 4163 form the EGF-like 5; calcium-binding domain; it reads DIDECSGNPCLHGALCENTHGSYHCNCSHEYRGRHCE. Asn4152 is a glycosylation site (N-linked (GlcNAc...) asparagine). A disulfide bridge links Cys4153 with Cys4162. A helical transmembrane segment spans residues 4182–4202; that stretch reads GIGIVVFVAGIFLLVVVFVLC. Topologically, residues 4203–4588 are cytoplasmic; the sequence is RKMISRKKKH…PLDSQQHTEV (386 aa). A Nuclear localization signal motif is present at residues 4204–4214; the sequence is KMISRKKKHQA. 3 disordered regions span residues 4255-4275, 4303-4327, and 4343-4376; these read SYTPSIPSDSRNNLDRNSFEG, SVAPNLPPPPPSNSPSDSDSIQKPS, and LSKKPLEEKPSQPYSARESLSEVQSLSSFQSESC. Polar residues predominate over residues 4256–4265; sequence YTPSIPSDSR. Polar residues predominate over residues 4363 to 4374; that stretch reads SEVQSLSSFQSE. The PTB-like motif motif lies at 4378–4382; that stretch reads DNGYH. 2 disordered regions span residues 4435–4479 and 4565–4588; these read FPPP…SSSR and ESGDDGHFEEVTIPPLDSQQHTEV.

As to quaternary structure, interacts (via the C-terminus 4300-4400 AA) with ATN1. Interacts with RERE. In terms of processing, undergoes proteolytic cleavage. The extracellular domain is cleaved off and the cytoplasmic domain (about 400 AA) shuttles to the nucleus. As to expression, expressed in many epithelial and some endothelial and smooth muscle cells.

The protein localises to the cell membrane. It is found in the nucleus. Plays an essential role for cellular polarization, directed cell migration and modulating cell-cell contact. The sequence is that of Protocadherin Fat 1 (FAT1) from Homo sapiens (Human).